A 79-amino-acid polypeptide reads, in one-letter code: Methionine-rich peptide X (79 aa).

An N-terminal signal peptide occupies residues 1 to 22 (MKKLAAVMLTSCLMVAVGASFA). The interval 37-79 (KKDDMAKDEMKKDSMAKDGMKKDAMKKDAMMKKDGMTKDEMKK) is disordered.

Protein is oxidized (possibly on Met residues) when cells are exposed to chlorite or hypochlorite; initially the protein is highly oxidized, by 50 minutes all protein is in the reduced form.

The protein resides in the periplasm. In terms of biological role, serves as an oxidative stress sink, specifically for chlorite and hypochlorite. The sequence is that of Methionine-rich peptide X from Azospira oryzae (strain ATCC BAA-33 / DSM 13638 / PS) (Dechlorosoma suillum).